Reading from the N-terminus, the 476-residue chain is Adenosylhomocysteinase (476 aa).

Residues Thr67, Asp142, and Glu202 each coordinate substrate. 203-205 (TTT) is a binding site for NAD(+). 2 residues coordinate substrate: Lys232 and Asp236. NAD(+)-binding positions include Asn237, 266 to 271 (GYGDVG), Glu289, Asn324, 345 to 347 (IGH), and Asn390.

It belongs to the adenosylhomocysteinase family. NAD(+) is required as a cofactor.

Its subcellular location is the cytoplasm. The catalysed reaction is S-adenosyl-L-homocysteine + H2O = L-homocysteine + adenosine. It functions in the pathway amino-acid biosynthesis; L-homocysteine biosynthesis; L-homocysteine from S-adenosyl-L-homocysteine: step 1/1. Its function is as follows. May play a key role in the regulation of the intracellular concentration of adenosylhomocysteine. The protein is Adenosylhomocysteinase of Prochlorococcus marinus (strain SARG / CCMP1375 / SS120).